Here is a 304-residue protein sequence, read N- to C-terminus: Ferredoxin fas2 (304 aa).

The 28-residue stretch at 2–29 folds into the 4Fe-4S ferredoxin-type domain; the sequence is KVVVNERRCFGSGQCVLVAPEVFEQSND. Cys10, Cys16, and Cys54 together coordinate [3Fe-4S] cluster. Residues 66 to 304 are transketolase-like; sequence MRQEPTEFSY…QSARSSIQQR (239 aa).

It in the C-terminal section; belongs to the transketolase family. It depends on [3Fe-4S] cluster as a cofactor.

In terms of biological role, plays a role in electron transfer. The fas operon encodes genes involved in cytokinin production and in host plant fasciation (leafy gall). The protein is Ferredoxin fas2 (fas2) of Rhodococcoides fascians (Rhodococcus fascians).